Here is a 215-residue protein sequence, read N- to C-terminus: LysM and putative peptidoglycan-binding domain-containing protein 2 (215 aa).

Residues 1-40 (MADSSPALSLREGGPRAPRPSAPSPPPRSRSGSESEEAEL) are disordered. The residue at position 2 (Ala-2) is an N-acetylalanine. A phosphoserine mark is found at Ser-5, Ser-24, Ser-33, and Ser-57. Positions 17–28 (APRPSAPSPPPR) are enriched in pro residues. In terms of domain architecture, LysM spans 71 to 115 (VEHRVRAGDTLQGIALKYGVTMEQIKRANKLFTNDCIFLKKTLNI). Disordered regions lie at residues 132–175 (DSPE…EEVS) and 193–215 (AAKK…LYHS). Over residues 196–205 (KLKEESRDEE) the composition is skewed to basic and acidic residues.

In Homo sapiens (Human), this protein is LysM and putative peptidoglycan-binding domain-containing protein 2 (LYSMD2).